Here is a 501-residue protein sequence, read N- to C-terminus: NAD(P)H-quinone oxidoreductase chain 4, chloroplastic (501 aa).

The next 14 helical transmembrane spans lie at 5-25 (FPWL…IFFL), 38-58 (ICIC…HFQL), 85-105 (GLSI…TLAA), 112-130 (SRLF…IGSF), 135-155 (LLLF…LLAM), 168-188 (FILY…GIGL), 209-229 (ALEI…LPII), 243-263 (HYST…YGLV), 275-295 (SIFS…AALT), 306-326 (IAYS…SITD), 331-351 (GAIL…FLAG), 387-407 (LALP…GIIT), 417-437 (ILIT…LLSM), and 463-483 (LFVS…PDFV).

It belongs to the complex I subunit 4 family.

It is found in the plastid. Its subcellular location is the chloroplast thylakoid membrane. It catalyses the reaction a plastoquinone + NADH + (n+1) H(+)(in) = a plastoquinol + NAD(+) + n H(+)(out). The enzyme catalyses a plastoquinone + NADPH + (n+1) H(+)(in) = a plastoquinol + NADP(+) + n H(+)(out). The sequence is that of NAD(P)H-quinone oxidoreductase chain 4, chloroplastic from Eucalyptus globulus subsp. globulus (Tasmanian blue gum).